Consider the following 208-residue polypeptide: Uridine kinase (208 aa).

11-18 (GGSGSGKT) contributes to the ATP binding site.

The protein belongs to the uridine kinase family.

It is found in the cytoplasm. The catalysed reaction is uridine + ATP = UMP + ADP + H(+). It catalyses the reaction cytidine + ATP = CMP + ADP + H(+). It participates in pyrimidine metabolism; CTP biosynthesis via salvage pathway; CTP from cytidine: step 1/3. The protein operates within pyrimidine metabolism; UMP biosynthesis via salvage pathway; UMP from uridine: step 1/1. This is Uridine kinase from Staphylococcus carnosus (strain TM300).